Here is an 89-residue protein sequence, read N- to C-terminus: Small ribosomal subunit protein bS20 (89 aa).

This sequence belongs to the bacterial ribosomal protein bS20 family.

Functionally, binds directly to 16S ribosomal RNA. The polypeptide is Small ribosomal subunit protein bS20 (Wolbachia pipientis subsp. Culex pipiens (strain wPip)).